We begin with the raw amino-acid sequence, 339 residues long: Serpentine receptor class delta-32 (339 aa).

7 helical membrane-spanning segments follow: residues 14 to 34, 45 to 65, 94 to 114, 128 to 148, 188 to 208, 237 to 257, and 269 to 289; these read AAVV…LIFF, VFLA…LLTV, IFTT…LSMV, SGAF…VVSI, LWVA…MFWC, ALTV…LIFL, and FGYI…LVTI.

This sequence belongs to the nematode receptor-like protein srd family.

The protein resides in the membrane. This chain is Serpentine receptor class delta-32 (srd-32), found in Caenorhabditis elegans.